Here is a 657-residue protein sequence, read N- to C-terminus: uncharacterized protein (657 aa).

Residues 1–17 (MACVLACVAVLIGAASA) form the signal peptide.

This is an uncharacterized protein from Orgyia pseudotsugata (Douglas-fir tussock moth).